Consider the following 376-residue polypeptide: Beta sliding clamp (376 aa).

Belongs to the beta sliding clamp family. In terms of assembly, forms a ring-shaped head-to-tail homodimer around DNA which binds and tethers DNA polymerases and other proteins to the DNA. The DNA replisome complex has a single clamp-loading complex (3 tau and 1 each of delta, delta', psi and chi subunits) which binds 3 Pol III cores (1 core on the leading strand and 2 on the lagging strand) each with a beta sliding clamp dimer. Additional proteins in the replisome are other copies of gamma, psi and chi, Ssb, DNA helicase and RNA primase.

It localises to the cytoplasm. Its function is as follows. Confers DNA tethering and processivity to DNA polymerases and other proteins. Acts as a clamp, forming a ring around DNA (a reaction catalyzed by the clamp-loading complex) which diffuses in an ATP-independent manner freely and bidirectionally along dsDNA. Initially characterized for its ability to contact the catalytic subunit of DNA polymerase III (Pol III), a complex, multichain enzyme responsible for most of the replicative synthesis in bacteria; Pol III exhibits 3'-5' exonuclease proofreading activity. The beta chain is required for initiation of replication as well as for processivity of DNA replication. The protein is Beta sliding clamp (dnaN) of Streptomyces coelicolor (strain ATCC BAA-471 / A3(2) / M145).